A 533-amino-acid polypeptide reads, in one-letter code: Invertase (533 aa).

The first 22 residues, 1-22, serve as a signal peptide directing secretion; sequence MVQVLSVLVIPLLTLFFGYVAS. Residues 47-50 and Gln68 contribute to the substrate site; that span reads WMND. The active site involves Asp50. The N-linked (GlcNAc...) asparagine glycan is linked to Asn72. 110-111 contacts substrate; it reads FS. N-linked (GlcNAc...) asparagine glycosylation is found at Asn119, Asn120, and Asn126. Residue 178–179 participates in substrate binding; it reads RD. A glycan (N-linked (GlcNAc...) asparagine) is linked at Asn219. A substrate-binding site is contributed by Trp314. N-linked (GlcNAc...) asparagine glycans are attached at residues Asn334, Asn392, and Asn419.

Belongs to the glycosyl hydrolase 32 family.

It carries out the reaction Hydrolysis of terminal non-reducing beta-D-fructofuranoside residues in beta-D-fructofuranosides.. This is Invertase (INV) from Schwanniomyces occidentalis (Yeast).